The chain runs to 604 residues: Solute carrier family 23 member 1 (604 aa).

A disordered region spans residues 1–29 (MKAQEDPGSSKQHECPDSAGTSTRDQQAP). Over 1-59 (MKAQEDPGSSKQHECPDSAGTSTRDQQAPLPAEPKFDMLYKIEDVPPWYLCILLGFQHY) the chain is Cytoplasmic. A helical transmembrane segment spans residues 60 to 80 (LTCFSGTIAVPFLLAEALCVG). The Extracellular segment spans residues 81–88 (RDQHMISQ). The chain crosses the membrane as a helical span at residues 89–109 (LIGTIFTCVGITTLIQTTVGI). Position 110 (arginine 110) is a topological domain, cytoplasmic. A helical membrane pass occupies residues 111–131 (LPLFQASAFAFLVPAKAILAL). The Extracellular segment spans residues 132–166 (ERWKCPPEEEIYGNWSMPLNTSHIWHPRIREVQGA). Residues asparagine 145 and asparagine 151 are each glycosylated (N-linked (GlcNAc...) asparagine). A helical transmembrane segment spans residues 167–187 (IMVSSVVEVVIGLLGLPGALL). Over 188 to 214 (SYIGPLTVTPTVSLIGLSVFQAAGDRA) the chain is Cytoplasmic. A helical transmembrane segment spans residues 215 to 232 (GSHWGISACSILLIVLFS). The Extracellular segment spans residues 233 to 236 (QYLR). The helical intramembrane region spans 237-250 (NLTFLLPVYRWGKG). Over 251-257 (LTLFRIQ) the chain is Extracellular. Residues 258-278 (IFKMFPIVLAIMTVWLLCYVL) traverse the membrane as a helical segment. Residues 279–319 (TLTDVLPADPTVYGFQARTDARGDIMAISPWIRIPYPCQWG) are Cytoplasmic-facing. Residues 320–340 (LPTVTVAAVLGMFSATLAGII) traverse the membrane as a helical segment. At 341 to 365 (ESIGDYYACARLAGAPPPPVHAINR) the chain is on the extracellular side. The helical transmembrane segment at 366 to 386 (GIFTEGVCCIIAGLLGTGNGS) threads the bilayer. Residues 387–409 (TSSSPNIGVLGITKVGSRRVVQY) are Cytoplasmic-facing. A helical membrane pass occupies residues 410–430 (GAGIMLILGAIGKFTALFASL). Residues 431–433 (PDP) lie on the Extracellular side of the membrane. The helical transmembrane segment at 434-454 (ILGGMFCTLFGMITAVGLSNL) threads the bilayer. Over 455–464 (QFVDMNSSRN) the chain is Cytoplasmic. A helical membrane pass occupies residues 465 to 485 (LFVLGFSMFFGLTLPNYLDSN). Residues 486 to 497 (PGAINTGVPEVD) lie on the Extracellular side of the membrane. The helical transmembrane segment at 498–518 (QILTVLLTTEMFVGGCLAFIL) threads the bilayer. The Cytoplasmic segment spans residues 519-604 (DNTVPGSPEE…TETGSVCTKV (86 aa)). Threonine 597 carries the post-translational modification Phosphothreonine. Serine 599 bears the Phosphoserine mark. A Phosphothreonine modification is found at threonine 602.

It belongs to the nucleobase:cation symporter-2 (NCS2) (TC 2.A.40) family. In terms of processing, phosphorylated. Highly expressed in the straight segment of proximal tubules in the kidney, in intestine and liver. Detected in epithelial cells of the bronchiole and epididymis.

It is found in the cell membrane. The enzyme catalyses L-ascorbate(out) + 2 Na(+)(out) = L-ascorbate(in) + 2 Na(+)(in). It carries out the reaction urate(out) + 2 Na(+)(out) = urate(in) + 2 Na(+)(in). In terms of biological role, sodium/ascorbate cotransporter. Mediates electrogenic uptake of vitamin C, with a stoichiometry of 2 Na(+) for each ascorbate. Has retained some ancestral activity toward nucleobases such as urate, an oxidized purine. Low-affinity high-capacity sodium:urate cotransporter, may regulate serum urate levels by serving as a renal urate re-absorber. This Rattus norvegicus (Rat) protein is Solute carrier family 23 member 1 (Slc23a1).